A 921-amino-acid polypeptide reads, in one-letter code: Isoleucine--tRNA ligase (921 aa).

The 'HIGH' region motif lies at Pro57–His67. Glu552 provides a ligand contact to L-isoleucyl-5'-AMP. The short motif at Lys593–Ser597 is the 'KMSKS' region element. ATP is bound at residue Lys596. The Zn(2+) site is built by Cys888, Cys891, Cys908, and Cys911.

It belongs to the class-I aminoacyl-tRNA synthetase family. IleS type 1 subfamily. Monomer. Zn(2+) is required as a cofactor.

It localises to the cytoplasm. The enzyme catalyses tRNA(Ile) + L-isoleucine + ATP = L-isoleucyl-tRNA(Ile) + AMP + diphosphate. Functionally, catalyzes the attachment of isoleucine to tRNA(Ile). As IleRS can inadvertently accommodate and process structurally similar amino acids such as valine, to avoid such errors it has two additional distinct tRNA(Ile)-dependent editing activities. One activity is designated as 'pretransfer' editing and involves the hydrolysis of activated Val-AMP. The other activity is designated 'posttransfer' editing and involves deacylation of mischarged Val-tRNA(Ile). The sequence is that of Isoleucine--tRNA ligase from Listeria welshimeri serovar 6b (strain ATCC 35897 / DSM 20650 / CCUG 15529 / CIP 8149 / NCTC 11857 / SLCC 5334 / V8).